We begin with the raw amino-acid sequence, 672 residues long: MSKLARLEREEIMECQVMWEPDSKKDTQMDRFRAAVGTACGLALGNYDDLYHWSVRSYSDFWAEFWKFSGIVCSRMYDEVVDTSKGIADVPEWFRGSRLNYAENLLRHKENDRVALYVAREGREEIAKVTFEELRQQVALFAAAMRKMGVKKGDRVVGYLPNSAHAVEAMLAAASIGAIWSSTSPDFGVNGVLDRFSQIQPKLIFSVEAVVYNGKEHGHLEKLQRVVKGLPDLQRVVLIPYVLPREKIDISKIPNSMFLDDFLASGTGAQAPQLEFEQLPFSHPLFIMFSSGTTGAPKCMVHSAGGTLIQHLKEHVLHGNMTSSDILLYYTTVGWMMWNWMVSALATGASLVLYDGSPLVPTPNVLWDLVDRIGITILGTGAKWLSVLEEKDMKPMETHNLHTLHTILSTGSPLKAQSYEYVYRCIKSTVLLGSISGGTDIISCFMGQNSSIPVYKGEIQARNLGMAVEAWDEEGKTVWGASGELVCTKPIPCQPTHFWNDENGSKYRKAYFSKYPGVWAHGDYCRINPKTGGIVMLGRSDGTLNPNGVRFGSSEIYNIVEAFDEVEDSLCVPQYNRDGEERVVLFLKMASGHTFQPDLVKHIRDAIRLGLSARHVPSLILETQGIPYTINGKKVEVAVKQVIAGKTVEHRGAFSNPESLDLYRDIPELQDF.

Belongs to the ATP-dependent AMP-binding enzyme family. As to expression, abundant in male subcutaneous white adipose tissue after weaning. In white adipose tissue, it is preferentially detected in mature adipocytes but not in preadipocytes. The expression in primary preadipocytes increases during the adipocyte differentiation. In brain, it is expressed in the midbrain, pons/medulla, cerebral cortex, hippocampus and cerebellum. The expression in the cerebellum is restricted primarily to glial cells, while in the cerebral cortex, it is restricted to neuronal cells.

It is found in the cytoplasm. It localises to the cytosol. The enzyme catalyses acetoacetate + ATP + CoA = acetoacetyl-CoA + AMP + diphosphate. Functionally, converts acetoacetate to acetoacetyl-CoA in the cytosol. Ketone body-utilizing enzyme, responsible for the synthesis of cholesterol and fatty acids. This is Acetoacetyl-CoA synthetase (Aacs) from Rattus norvegicus (Rat).